Consider the following 376-residue polypeptide: tRNA (guanine(26)-N(2))-dimethyltransferase (376 aa).

The 370-residue stretch at 4 to 373 (VAVKEGLARI…APFGVVAEVM (370 aa)) folds into the Trm1 methyltransferase domain. Residues Arg-36, Arg-61, Asp-78, Asp-120, and Ala-121 each contribute to the S-adenosyl-L-methionine site.

Belongs to the class I-like SAM-binding methyltransferase superfamily. Trm1 family.

It catalyses the reaction guanosine(26) in tRNA + 2 S-adenosyl-L-methionine = N(2)-dimethylguanosine(26) in tRNA + 2 S-adenosyl-L-homocysteine + 2 H(+). Dimethylates a single guanine residue at position 26 of a number of tRNAs using S-adenosyl-L-methionine as donor of the methyl groups. In Thermococcus kodakarensis (strain ATCC BAA-918 / JCM 12380 / KOD1) (Pyrococcus kodakaraensis (strain KOD1)), this protein is tRNA (guanine(26)-N(2))-dimethyltransferase.